Consider the following 250-residue polypeptide: Kv channel-interacting protein 4 (250 aa).

Residues 2–44 (NVRRVESISAQLEEASSTGGFLYTQNSTKRSIKERLMKLLPCS) form a KIS region. Ser17 and Ser56 each carry phosphoserine. The EF-hand 1; degenerate domain occupies 61-117 (LEMATVRHRPEALELLEAQSKFTKKELQILYRGFKNECPSGVVNEDTFKEIYSQFFP). EF-hand domains are found at residues 120 to 155 (DSTT…LLRG), 156 to 191 (TVQE…IYDM), and 204 to 239 (APRQ…DENI). Residues Asp133, Asp135, Asn137, Asp144, Asp169, Asn171, Asp173, Tyr175, Glu180, Asp217, Asn219, Asp221, and Glu228 each coordinate Ca(2+). Residues 237–250 (ENIMRSMQLFENVI) are interaction with KCND2.

The protein belongs to the recoverin family. As to quaternary structure, component of heteromultimeric potassium channels. Identified in potassium channel complexes containing KCND1, KCND2, KCND3, KCNIP1, KCNIP2, KCNIP3, KCNIP4, DPP6 and DPP10. Interacts with KCND2. Interacts with KCND3. Interacts with the C-terminus of PSEN2 and probably PSEN1.

It is found in the cell membrane. It localises to the cytoplasm. Its subcellular location is the peroxisome. Functionally, regulatory subunit of Kv4/D (Shal)-type voltage-gated rapidly inactivating A-type potassium channels. Modulates KCND2 channel density, inactivation kinetics and rate of recovery from inactivation in a calcium-dependent and isoform-specific manner. Modulates KCND3/Kv4.3 currents. Isoform 4 does not increase KCND2 expression at the cell membrane. Isoform 4 retains KCND3 in the endoplasmic reticulum and negatively regulates its expression at the cell membrane. This is Kv channel-interacting protein 4 (KCNIP4) from Bos taurus (Bovine).